Here is a 78-residue protein sequence, read N- to C-terminus: Small ribosomal subunit protein uS17 (78 aa).

It belongs to the universal ribosomal protein uS17 family. In terms of assembly, part of the 30S ribosomal subunit.

Functionally, one of the primary rRNA binding proteins, it binds specifically to the 5'-end of 16S ribosomal RNA. This chain is Small ribosomal subunit protein uS17, found in Sinorhizobium fredii (strain NBRC 101917 / NGR234).